Consider the following 423-residue polypeptide: Tegument protein UL43 (423 aa).

The segment covering 1-12 (MEKTPAETTAVS) has biased composition (polar residues). Residues 1 to 46 (MEKTPAETTAVSAGNVPRDSIPCITNVSADTRGRTRPSRPATVPQR) form a disordered region.

It belongs to the herpesviridae US22 family.

The protein resides in the virion tegument. This chain is Tegument protein UL43 (UL43), found in Homo sapiens (Human).